A 322-amino-acid polypeptide reads, in one-letter code: Phosphatidylserine decarboxylase proenzyme (322 aa).

Active-site charge relay system; for autoendoproteolytic cleavage activity residues include aspartate 90, histidine 147, and serine 254. Serine 254 acts as the Schiff-base intermediate with substrate; via pyruvic acid; for decarboxylase activity in catalysis. Residue serine 254 is modified to Pyruvic acid (Ser); by autocatalysis. The interval 293 to 322 (PDAEPAPLPAEEIEAEHDASPLVDDKKDQV) is disordered. The span at 308-322 (EHDASPLVDDKKDQV) shows a compositional bias: basic and acidic residues.

The protein belongs to the phosphatidylserine decarboxylase family. PSD-B subfamily. Prokaryotic type I sub-subfamily. As to quaternary structure, heterodimer of a large membrane-associated beta subunit and a small pyruvoyl-containing alpha subunit. Requires pyruvate as cofactor. Is synthesized initially as an inactive proenzyme. Formation of the active enzyme involves a self-maturation process in which the active site pyruvoyl group is generated from an internal serine residue via an autocatalytic post-translational modification. Two non-identical subunits are generated from the proenzyme in this reaction, and the pyruvate is formed at the N-terminus of the alpha chain, which is derived from the carboxyl end of the proenzyme. The autoendoproteolytic cleavage occurs by a canonical serine protease mechanism, in which the side chain hydroxyl group of the serine supplies its oxygen atom to form the C-terminus of the beta chain, while the remainder of the serine residue undergoes an oxidative deamination to produce ammonia and the pyruvoyl prosthetic group on the alpha chain. During this reaction, the Ser that is part of the protease active site of the proenzyme becomes the pyruvoyl prosthetic group, which constitutes an essential element of the active site of the mature decarboxylase.

Its subcellular location is the cell membrane. The catalysed reaction is a 1,2-diacyl-sn-glycero-3-phospho-L-serine + H(+) = a 1,2-diacyl-sn-glycero-3-phosphoethanolamine + CO2. It functions in the pathway phospholipid metabolism; phosphatidylethanolamine biosynthesis; phosphatidylethanolamine from CDP-diacylglycerol: step 2/2. In terms of biological role, catalyzes the formation of phosphatidylethanolamine (PtdEtn) from phosphatidylserine (PtdSer). This chain is Phosphatidylserine decarboxylase proenzyme, found in Escherichia coli O9:H4 (strain HS).